The primary structure comprises 718 residues: Effector protein hopM1 (718 aa).

Residues 1–10 (MIGTRVGGSG) show a composition bias toward gly residues. Disordered stretches follow at residues 1–63 (MIGT…ARLP) and 683–718 (GVSS…GRRR). The span at 11-22 (STEIVQANQPQP) shows a compositional bias: polar residues. Low complexity predominate over residues 44-60 (ASQSAAQAPESSAAGAA).

Interacts with the chaperone ShcM.

Its subcellular location is the secreted. The protein resides in the host membrane. Involved in the suppression of basal resistance and promotion of disease symptoms in plants. May be involved in the inhibition of a host vesicle trafficking pathway. The sequence is that of Effector protein hopM1 (hopM1) from Pseudomonas syringae pv. syringae (strain B728a).